The primary structure comprises 222 residues: RNA chaperone ProQ (222 aa).

A compositionally biased stretch (basic and acidic residues) spans 94–113 (EHADHAKQQLDESKAKAAEK). Positions 94-171 (EHADHAKQQL…PAKLTDSDLQ (78 aa)) are disordered. Basic residues predominate over residues 114–131 (RKAKLAQQPKRKDKRQFN). Over residues 133-148 (PKGEKSANSDHADTKR) the composition is skewed to basic and acidic residues. The span at 155-164 (NRPNTTPPAK) shows a compositional bias: low complexity.

The protein belongs to the ProQ family.

It is found in the cytoplasm. In terms of biological role, RNA chaperone with significant RNA binding, RNA strand exchange and RNA duplexing activities. In Alteromonas mediterranea (strain DSM 17117 / CIP 110805 / LMG 28347 / Deep ecotype), this protein is RNA chaperone ProQ.